Here is a 167-residue protein sequence, read N- to C-terminus: I-Kappa-B like protein F2 (167 aa).

ANK repeat units lie at residues 54 to 86, 91 to 121, and 125 to 154; these read HGKQCVHIVSNPGIADPQEKLKLLMEWGADING, FGNTPLHIAAYTQNHKLATWLCNQPGINMGI, and LFKTPYYVACERHDLKIMNILRAKGTRCGV.

The protein belongs to the polydnaviridae I-Kappa-B-like protein family.

Functionally, suppresses the host immune response through NF-kappa-B inactivation. Possesses ankyrin repeat domains required for NF-kappa-B binding but lacks the regulatory regions required for dissociation from NF-kappa-B and degradation. Therefore, prevents host NF-kappa-B release and subsequent activation. The sequence is that of I-Kappa-B like protein F2 (F3) from Microplitis demolitor bracovirus (isolate Webb) (MdBV).